An 873-amino-acid chain; its full sequence is Protein SEY1 (873 aa).

A disordered region spans residues 1–21 (MVANGHFAGSADGQDSSSYEH). At 1–749 (MVANGHFAGS…KRSAIGGITQ (749 aa)) the chain is on the cytoplasmic side. Residues 49 to 307 (GFNYHLISVF…IPADGFAVYA (259 aa)) form the GB1/RHD3-type G domain. Position 59–66 (59–66 (GSQSTGKS)) interacts with GTP. A coiled-coil region spans residues 482–506 (SNYQQELSLYQKDLERTSGQLRRDE). The segment at 676-703 (LDKWIGHTPSSATPADEEDLTPIGGVDD) is disordered. Positions 690 to 703 (ADEEDLTPIGGVDD) are enriched in acidic residues. Residues 750 to 770 (VPLYFYGLLFALGWNEILAVL) traverse the membrane as a helical segment. At 771–773 (RNP) the chain is on the lumenal side. Residues 774-794 (VYFLLLFVCAIGAYITYQLNL) traverse the membrane as a helical segment. The Cytoplasmic segment spans residues 795-873 (WGPIIKMTEA…EDVDDDDDDF (79 aa)). Residues 828-873 (RQAMAMSGARNATEEHEMSRLSRKPAERGGRKNRADEDVDDDDDDF) are disordered. Basic and acidic residues predominate over residues 839–863 (ATEEHEMSRLSRKPAERGGRKNRAD). Acidic residues predominate over residues 864–873 (EDVDDDDDDF).

The protein belongs to the TRAFAC class dynamin-like GTPase superfamily. GB1/RHD3 GTPase family. RHD3 subfamily.

It localises to the endoplasmic reticulum membrane. Functionally, cooperates with the reticulon proteins and tubule-shaping DP1 family proteins to generate and maintain the structure of the tubular endoplasmic reticulum network. Has GTPase activity, which is required for its function in ER organization. The chain is Protein SEY1 from Ajellomyces capsulatus (strain G186AR / H82 / ATCC MYA-2454 / RMSCC 2432) (Darling's disease fungus).